Reading from the N-terminus, the 171-residue chain is MTDSPRPELDMETQEFVHQLFDLARQGNSQRLEQLLQQGLPPNLRNHKGDSLLMLASYHGHADTVRLLLAYKADPDLRNLAGQTPLAGAAFKGDLAMVELLLAGGADVEGASADGKTALMMAAMFNQAEVAASLLAHGARRDAQDAAGLTPLAAARMMNAEATVALLSRPH.

3 ANK repeats span residues 48-77, 81-110, and 114-143; these read KGDS…DPDL, AGQT…DVEG, and DGKT…RRDA.

The sequence is that of Putative ankyrin repeat protein PA3287 from Pseudomonas aeruginosa (strain ATCC 15692 / DSM 22644 / CIP 104116 / JCM 14847 / LMG 12228 / 1C / PRS 101 / PAO1).